We begin with the raw amino-acid sequence, 327 residues long: Phenylalanine--tRNA ligase alpha subunit (327 aa).

Position 252 (Glu252) interacts with Mg(2+).

The protein belongs to the class-II aminoacyl-tRNA synthetase family. Phe-tRNA synthetase alpha subunit type 1 subfamily. Tetramer of two alpha and two beta subunits. It depends on Mg(2+) as a cofactor.

It localises to the cytoplasm. It catalyses the reaction tRNA(Phe) + L-phenylalanine + ATP = L-phenylalanyl-tRNA(Phe) + AMP + diphosphate + H(+). The polypeptide is Phenylalanine--tRNA ligase alpha subunit (Yersinia pseudotuberculosis serotype O:1b (strain IP 31758)).